We begin with the raw amino-acid sequence, 678 residues long: Glutamic acid-rich protein (678 aa).

A signal peptide spans 1-25 (MNVLFLSYNICILFFVVCTLNFSTK). Residues 56–79 (EKNKDDNSKSETLLKEEKDEKDDV) show a composition bias toward basic and acidic residues. 3 disordered regions span residues 56-194 (EKNK…NLDE), 225-445 (ISSV…VVKN), and 520-678 (VVPR…NAKI). A compositionally biased stretch (polar residues) spans 80-107 (PTTSNDNLKNAHNNNEISSSTDPTNIIN). A compositionally biased stretch (basic and acidic residues) spans 109–120 (NDKDNENSVDKK). 15 consecutive repeat copies span residues 120–122 (KKD), 123–125 (KKE), 126–128 (KKH), 129–131 (KKD), 132–134 (KKE), 135–137 (KKE), 138–140 (KKD), 141–143 (KKE), 144–146 (KKD), 147–149 (KKE), 150–152 (KKH), 153–155 (KKE), 156–158 (KKH), 159–161 (KKD), and 162–164 (KKK). The tract at residues 120–164 (KKDKKEKKHKKDKKEKKEKKDKKEKKDKKEKKHKKEKKHKKDKKK) is 15 X 3 AA tandem repeats of K-K-[DEHK]. Basic residues predominate over residues 121–165 (KDKKEKKHKKDKKEKKEKKDKKEKKDKKEKKHKKEKKHKKDKKKK). 2 stretches are compositionally biased toward basic and acidic residues: residues 231-329 (TSND…EEKE) and 371-411 (PEEH…EHKS). Repeat copies occupy residues 372–376 (EEHKE), 377–381 (GEHKE), 382–386 (EEHKE), 387–391 (GEHKE), 392–396 (GEHKE), 397–401 (EEHKE), 402–406 (EEHKK), 407–411 (EEHKS), 412–416 (KEHKS), 417–421 (KGKKD), 422–426 (KGKKD), 427–431 (KGKHK), 432–436 (KAKKE), and 437–441 (KVKKH). Residues 372–416 (EEHKEGEHKEEEHKEGEHKEGEHKEEEHKEEEHKKEEHKSKEHKS) are 9 X 5 AA tandem repeats of [EGK]-E-H-K-[EKS]. The segment covering 412–443 (KEHKSKGKKDKGKKDKGKHKKAKKEKVKKHVV) has biased composition (basic residues). The 5 X 5 AA tandem repeats of K-[GAV]-K-[KH]-[DKEH] stretch occupies residues 417 to 441 (KGKKDKGKKDKGKHKKAKKEKVKKH). Residues 532–565 (AKIEEAELQKQKHVDKEEDKKEESKEVQEESKEV) show a composition bias toward basic and acidic residues. The span at 566–663 (QEDEEEVEED…EEEEEEEEEE (98 aa)) shows a compositional bias: acidic residues. Basic residues predominate over residues 667–678 (KIKRNLRKNAKI).

This is Glutamic acid-rich protein (GARP) from Plasmodium falciparum (isolate FC27 / Papua New Guinea).